The following is a 203-amino-acid chain: WUSCHEL-related homeobox 3 (203 aa).

The homeobox; WUS-type DNA-binding region spans 4–68 (TPSTRWCPTP…NHKARERQRL (65 aa)). 3 disordered regions span residues 73-95 (CARH…TAAA), 109-135 (LHHH…QQQQ), and 180-203 (STSG…TSTN). The span at 80–91 (PSPPSSTVPPAP) shows a compositional bias: pro residues. Positions 109 to 118 (LHHHHHHHHP) are enriched in basic residues. Composition is skewed to low complexity over residues 119-135 (YAAA…QQQQ) and 190-203 (CSSS…TSTN).

This sequence belongs to the WUS homeobox family.

The protein resides in the nucleus. Its function is as follows. Transcription factor which may be involved in developmental processes. The polypeptide is WUSCHEL-related homeobox 3 (WOX3) (Oryza sativa subsp. indica (Rice)).